A 436-amino-acid polypeptide reads, in one-letter code: Histone acetyltransferase type B subunit 2 (436 aa).

Residues 1–19 (MEPYDDGFIEEQEEQEEER) are compositionally biased toward acidic residues. The segment at 1-22 (MEPYDDGFIEEQEEQEEERTEE) is disordered. WD repeat units lie at residues 136-176 (DHKG…SLPT), 187-227 (GHTK…KGNK), 237-277 (HHSS…TTRA), 284-324 (QHRD…TKLH), and 328-368 (CHTD…EEQT). Residues 370–374 (DDAQD) form an interaction with the histone H4 N-terminus region. A WD 6 repeat occupies 385 to 425 (GHTNRISDFSWNLNDPWVLCSAAEDNLLQVWKVADAIVGKD).

Belongs to the WD repeat RBAP46/RBAP48/MSI1 family. As to quaternary structure, component of the HAT-B complex composed of at least hat1 and hat2. The HAT-B complex binds to histone H4 tail.

It is found in the cytoplasm. The protein localises to the nucleus. In terms of biological role, regulatory subunit of the histone acetylase B (HAT-B) complex. The complex acetylates 'Lys-12' of histone H4 which is required for telomeric silencing. This is Histone acetyltransferase type B subunit 2 (hat2) from Aspergillus oryzae (strain ATCC 42149 / RIB 40) (Yellow koji mold).